The primary structure comprises 191 residues: Calcium-activated potassium channel subunit beta-1 (191 aa).

At 1-18 (MGKKLVMAQKRGETRALC) the chain is on the cytoplasmic side. Residues 19 to 39 (LGVAMVVCAAITYYILGTTVL) traverse the membrane as a helical segment. Topologically, residues 40-155 (PLYQKSVWTQ…VVYQRLYGPQ (116 aa)) are extracellular. N-linked (GlcNAc...) asparagine glycosylation is found at N80 and N142. A helical transmembrane segment spans residues 156–176 (ILLFSFFWPTFLLTGGLLIIA). Over 177 to 191 (MVKLNRSLSVLAAQK) the chain is Cytoplasmic.

This sequence belongs to the KCNMB (TC 8.A.14.1) family. KCNMB1 subfamily. Interacts with KCNMA1 tetramer. There are probably 4 molecules of KCMNB1 per KCNMA1 tetramer. In terms of processing, N-glycosylated. As to expression, weakly expressed. In brain, it is expressed in a few discrete populations of neurons that also express KCNMA1.

It localises to the membrane. Regulatory subunit of the calcium activated potassium KCNMA1 (maxiK) channel. Modulates the calcium sensitivity and gating kinetics of KCNMA1, thereby contributing to KCNMA1 channel diversity. Increases the apparent Ca(2+)/voltage sensitivity of the KCNMA1 channel. It also modifies KCNMA1 channel kinetics and alters its pharmacological properties. It slows down the activation and the deactivation kinetics of the channel. Acts as a negative regulator of smooth muscle contraction by enhancing the calcium sensitivity to KCNMA1. Its presence is also a requirement for internal binding of the KCNMA1 channel opener dehydrosoyasaponin I (DHS-1) triterpene glycoside and for external binding of the agonist hormone 17-beta-estradiol (E2). Increases the binding activity of charybdotoxin (CTX) toxin to KCNMA1 peptide blocker by increasing the CTX association rate and decreasing the dissociation rate. The protein is Calcium-activated potassium channel subunit beta-1 (Kcnmb1) of Rattus norvegicus (Rat).